We begin with the raw amino-acid sequence, 591 residues long: Pentatricopeptide repeat-containing protein At3g47530 (591 aa).

9 PPR repeats span residues 76 to 110 (TLSH…SSLP), 112 to 146 (NPLS…GFLS), 147 to 177 (DSLL…IPKR), 178 to 208 (DTVS…MKND), 216 to 250 (DGVT…GLSG), 251 to 281 (ALNL…MRER), 282 to 316 (NVVS…GISP), 317 to 351 (EEQT…EFKI), and 354 to 384 (NLHH…MEMK). The segment at 389-464 (IWRTLLGACR…KPGCSAIELQ (76 aa)) is type E motif. Residues 465 to 495 (GTVHEFIVDDVSHPRKEEIYKMLAEINQQLK) are type E(+) motif. Residues 496–591 (IAGYVAEITS…GGSCSCNDFW (96 aa)) form a type DYW motif region.

Belongs to the PPR family. PCMP-H subfamily.

The sequence is that of Pentatricopeptide repeat-containing protein At3g47530 (PCMP-H76) from Arabidopsis thaliana (Mouse-ear cress).